A 38-amino-acid polypeptide reads, in one-letter code: Photosystem I reaction center subunit IX (38 aa).

Residues Phe-4 to Ile-24 form a helical membrane-spanning segment.

It belongs to the PsaJ family.

It localises to the cellular thylakoid membrane. In terms of biological role, may help in the organization of the PsaE and PsaF subunits. The protein is Photosystem I reaction center subunit IX of Synechococcus sp. (strain CC9902).